Here is a 285-residue protein sequence, read N- to C-terminus: Methionine aminopeptidase 2 (285 aa).

H114 is a substrate binding site. A divalent metal cation contacts are provided by D131, D142, and H205. Residue H212 coordinates substrate. E238 and E269 together coordinate a divalent metal cation.

In terms of assembly, monomer. It depends on Co(2+) as a cofactor. Zn(2+) serves as cofactor. Requires Mn(2+) as cofactor. Fe(2+) is required as a cofactor.

The catalysed reaction is Release of N-terminal amino acids, preferentially methionine, from peptides and arylamides.. With respect to regulation, inhibited by bengamide derivatives and by various metalloform-selective inhibitors. Its function is as follows. Removes the N-terminal methionine from nascent proteins. The N-terminal methionine is often cleaved when the second residue in the primary sequence is small and uncharged (Met-Ala-, Cys, Gly, Pro, Ser, Thr, or Val). Requires deformylation of the N(alpha)-formylated initiator methionine before it can be hydrolyzed. This Mycobacterium tuberculosis (strain ATCC 25618 / H37Rv) protein is Methionine aminopeptidase 2.